We begin with the raw amino-acid sequence, 149 residues long: MADQLTEEQIAEFKEAFSLFDKDGDGSITTQELGTVMRSLGQNPTEAELQGMVNEIDKDGNGTVDFPEFLTMMSRKMKDTDSEEEIREAFRVFDKDGNGFVSAAELRHVMTKLGEKLSDEEVDEMIQAADTDGDGQVNYEEFVHMLVSK.

EF-hand domains follow at residues 8 to 43 (EQIA…LGQN), 44 to 79 (PTEA…KMKD), 81 to 116 (DSEE…LGEK), and 117 to 149 (LSDE…LVSK). Ca(2+) is bound by residues Asp-21, Asp-23, Asp-25, Ser-27, Glu-32, Asp-57, Asp-59, Asn-61, Thr-63, Glu-68, Asp-94, Asp-96, Asn-98, Glu-105, Asp-130, Asp-132, Asp-134, Gln-136, and Glu-141.

This sequence belongs to the calmodulin family. Interacts with MYO10, the interaction is calcium-dependent and essential for MYO10 function in filopodial extension.

May function as a specific light chain of unconventional myosin-10 (MYO10), also enhances MYO10 translation, possibly by acting as a chaperone for the emerging MYO10 heavy chain protein. May compete with calmodulin by binding, with different affinities, to cellular substrates. This chain is Calmodulin-like protein 3 (Calml3), found in Mus musculus (Mouse).